A 453-amino-acid chain; its full sequence is Glutamate-rich protein 5 (453 aa).

3 disordered regions span residues 1-38 (MGCSSSALNKAGDDNRLRSATEESESCFVQPKPRALGR), 66-377 (NGVQ…EHPA), and 394-453 (TNEE…HSML). Residues 11–21 (AGDDNRLRSAT) are compositionally biased toward basic and acidic residues. Ser-155 is modified (phosphoserine). Composition is skewed to polar residues over residues 230–243 (LQETVGENEQSQPL) and 271–283 (QETLGENEQSQLR). Composition is skewed to basic and acidic residues over residues 305-332 (EEEKRLQEMLGKDEQPQLRETIPREHGG), 364-374 (IQPERTVESME), and 394-403 (TNEEDQHIEG). Acidic residues predominate over residues 404-413 (ETGETVETEM). Positions 414-424 (ESEKVSEGAET) are enriched in basic and acidic residues.

The polypeptide is Glutamate-rich protein 5 (ERICH5) (Bos taurus (Bovine)).